We begin with the raw amino-acid sequence, 435 residues long: Glutamate-1-semialdehyde 2,1-aminomutase (435 aa).

Lysine 266 carries the N6-(pyridoxal phosphate)lysine modification.

It belongs to the class-III pyridoxal-phosphate-dependent aminotransferase family. HemL subfamily. In terms of assembly, homodimer. Requires pyridoxal 5'-phosphate as cofactor.

Its subcellular location is the cytoplasm. The enzyme catalyses (S)-4-amino-5-oxopentanoate = 5-aminolevulinate. The protein operates within porphyrin-containing compound metabolism; protoporphyrin-IX biosynthesis; 5-aminolevulinate from L-glutamyl-tRNA(Glu): step 2/2. This Coxiella burnetii (strain CbuG_Q212) (Coxiella burnetii (strain Q212)) protein is Glutamate-1-semialdehyde 2,1-aminomutase.